The sequence spans 329 residues: MQNSIIGFLKPRLVEIEQITATHTKVTLEPLERGFGHTLGNALRRILLSSMPGYAVTEVEIDGVLHEYSTKEGVQEDILEILLNLKELAVKVHGKDEVFMSLNKSGIGSVTASDIIHDGDVEIIKPDHLICHLTDENASIQMRIKVQRGRGYIPASSRIHMEDDLRPIGCLLVDACYSPINRISYNVEAARVEQRTDLDKLIIEMKTNGTIDPEEAIRRAATILSEQLEAFVDLRDVKEPEIKEEKPEFEPILLRPVDDLELTVRSANCLKAESIHYIGDLVQRTEVELLKTPNLGKKSLTEIKDILAARNLSLGMKLEKWPPSSILEE.

An alpha N-terminal domain (alpha-NTD) region spans residues 1 to 235; sequence MQNSIIGFLK…EQLEAFVDLR (235 aa). Positions 249–329 are alpha C-terminal domain (alpha-CTD); it reads FEPILLRPVD…KWPPSSILEE (81 aa).

The protein belongs to the RNA polymerase alpha chain family. As to quaternary structure, homodimer. The RNAP catalytic core consists of 2 alpha, 1 beta, 1 beta' and 1 omega subunit. When a sigma factor is associated with the core the holoenzyme is formed, which can initiate transcription.

The catalysed reaction is RNA(n) + a ribonucleoside 5'-triphosphate = RNA(n+1) + diphosphate. Its function is as follows. DNA-dependent RNA polymerase catalyzes the transcription of DNA into RNA using the four ribonucleoside triphosphates as substrates. The sequence is that of DNA-directed RNA polymerase subunit alpha from Buchnera aphidicola subsp. Schizaphis graminum (strain Sg).